Consider the following 218-residue polypeptide: Thiopurine S-methyltransferase (218 aa).

S-adenosyl-L-methionine is bound by residues Trp10, Leu45, Glu66, and Arg123.

The protein belongs to the class I-like SAM-binding methyltransferase superfamily. TPMT family.

The protein resides in the cytoplasm. The enzyme catalyses S-adenosyl-L-methionine + a thiopurine = S-adenosyl-L-homocysteine + a thiopurine S-methylether.. The polypeptide is Thiopurine S-methyltransferase (Azotobacter vinelandii (strain DJ / ATCC BAA-1303)).